Consider the following 94-residue polypeptide: Aspartyl/glutamyl-tRNA(Asn/Gln) amidotransferase subunit C (94 aa).

It belongs to the GatC family. As to quaternary structure, heterotrimer of A, B and C subunits.

It catalyses the reaction L-glutamyl-tRNA(Gln) + L-glutamine + ATP + H2O = L-glutaminyl-tRNA(Gln) + L-glutamate + ADP + phosphate + H(+). The catalysed reaction is L-aspartyl-tRNA(Asn) + L-glutamine + ATP + H2O = L-asparaginyl-tRNA(Asn) + L-glutamate + ADP + phosphate + 2 H(+). In terms of biological role, allows the formation of correctly charged Asn-tRNA(Asn) or Gln-tRNA(Gln) through the transamidation of misacylated Asp-tRNA(Asn) or Glu-tRNA(Gln) in organisms which lack either or both of asparaginyl-tRNA or glutaminyl-tRNA synthetases. The reaction takes place in the presence of glutamine and ATP through an activated phospho-Asp-tRNA(Asn) or phospho-Glu-tRNA(Gln). This chain is Aspartyl/glutamyl-tRNA(Asn/Gln) amidotransferase subunit C, found in Desulfatibacillum aliphaticivorans.